A 311-amino-acid polypeptide reads, in one-letter code: Ribosomal RNA small subunit methyltransferase H (311 aa).

S-adenosyl-L-methionine contacts are provided by residues 33–35, D53, F80, D101, and Q108; that span reads AGH.

This sequence belongs to the methyltransferase superfamily. RsmH family.

Its subcellular location is the cytoplasm. It catalyses the reaction cytidine(1402) in 16S rRNA + S-adenosyl-L-methionine = N(4)-methylcytidine(1402) in 16S rRNA + S-adenosyl-L-homocysteine + H(+). In terms of biological role, specifically methylates the N4 position of cytidine in position 1402 (C1402) of 16S rRNA. This Geobacter sulfurreducens (strain ATCC 51573 / DSM 12127 / PCA) protein is Ribosomal RNA small subunit methyltransferase H.